Here is a 784-residue protein sequence, read N- to C-terminus: DNA repair and recombination protein RAD54-like (784 aa).

Positions 1 to 50 (MRRSLAPSQRGPLRPESRHSFTPPLLKKNKRSCQQELEREQELDRKRQSA) are disordered. The interval 2–9 (RRSLAPSQ) is required for chromatin remodeling, strand pairing activities and coupling of ATPase activity. Position 20 is a phosphoserine (Ser20). Position 22 is a phosphothreonine (Thr22). The segment covering 36 to 47 (ELEREQELDRKR) has biased composition (basic and acidic residues). Residues 172–346 (EGKRGNFNGC…YSLVNFVNPE (175 aa)) enclose the Helicase ATP-binding domain. 185-192 (DEMGLGKT) contributes to the ATP binding site. A DEGH box motif is present at residues 297–300 (DEGH). Residues 503–660 (LLDFMLAAIR…NNESAEKHFT (158 aa)) enclose the Helicase C-terminal domain. Residues 747–756 (VASAEEAASE) show a composition bias toward low complexity. The interval 747-784 (VASAEEAASEQPEEKPDRRKRPSTPLSDDSADEDFLGF) is disordered. A compositionally biased stretch (acidic residues) spans 775 to 784 (DSADEDFLGF).

This sequence belongs to the SNF2/RAD54 helicase family. In terms of assembly, interacts (via N-terminus) with spn-A/Rad51.

It is found in the nucleus. Its function is as follows. Involved in mitotic DNA repair and meiotic recombination. Functions in the recombinational DNA repair pathway. Essential for interhomolog gene conversion (GC), but may have a less important role in intersister GC than spn-A/Rad51. In the presence of DNA, spn-A/Rad51 enhances the ATPase activity of okr/Rad54. This chain is DNA repair and recombination protein RAD54-like, found in Drosophila erecta (Fruit fly).